Reading from the N-terminus, the 777-residue chain is Subtilisin-like protease SBT1.4 (777 aa).

The signal sequence occupies residues 1 to 25 (MAKLSLSSIFFVFPLLLCFFSPSSS). A propeptide spans 26-110 (SSDGLESYIV…VIPDQAREIH (85 aa)) (activation peptide). The Inhibitor I9 domain maps to 32–110 (SYIVHVQRSH…VIPDQAREIH (79 aa)). In terms of domain architecture, Peptidase S8 spans 115–614 (PAFLGFSQNS…AGHVDPNKAL (500 aa)). D142 functions as the Charge relay system in the catalytic mechanism. An N-linked (GlcNAc...) asparagine glycan is attached at N198. The segment at 199–223 (GTKKHAAKESRSPRDTEGHGTHTAS) is disordered. A compositionally biased stretch (basic and acidic residues) spans 205-218 (AKESRSPRDTEGHG). H217 acts as the Charge relay system in catalysis. N-linked (GlcNAc...) asparagine glycans are attached at residues N232 and N395. Positions 376-461 (LSLVYSGDCG…VGAKAGDQIR (86 aa)) constitute a PA domain. S546 functions as the Charge relay system in the catalytic mechanism.

The protein belongs to the peptidase S8 family.

It localises to the secreted. This Arabidopsis thaliana (Mouse-ear cress) protein is Subtilisin-like protease SBT1.4.